The following is a 523-amino-acid chain: Nuclear receptor ROR-alpha (523 aa).

The segment covering 1 to 26 (MESAPAAPDPAASEPGSSGSEAAAGS) has biased composition (low complexity). The disordered stretch occupies residues 1–63 (MESAPAAPDP…SRGISVTKKT (63 aa)). At K38 the chain carries N6-methyllysine. 2 NR C4-type zinc fingers span residues 73 to 93 (CKIC…CEGC) and 109 to 133 (CPRQ…LQKC). The nuclear receptor DNA-binding region spans 73-138 (CKICGDKSSG…RLQKCLAVGM (66 aa)). The tract at residues 154 to 183 (DSLYAEVQKHRMQQQQRDHQQQPGEAEPLT) is disordered. The residue at position 183 (T183) is a Phosphothreonine; by MAPK1. K240 participates in a covalent cross-link: Glycyl lysine isopeptide (Lys-Gly) (interchain with G-Cter in SUMO). Positions 272–510 (ELEHLAQNIS…LHFPPLYKEL (239 aa)) constitute an NR LBD domain. Positions 506–511 (LYKELF) match the AF-2 motif.

Belongs to the nuclear hormone receptor family. NR1 subfamily. In terms of assembly, monomer. Interacts (via the DNA-binding domain) with HIF1A; the interaction enhances HIF1A transcription under hypoxia through increasing protein stability. Interacts with CEBPB; the interaction disrupts the interaction CEBPB:EP300. Interacts with the coactivators NCOA2, PPARGC1A (via LXXLL motif), EP300 and MED1. Interacts with the corepressor NCOR1. Interacts with MAGED1 and CTNNB1. Interacts with CRY1 and PER2. Interacts (via AF-2 motif) with PROX1. Interacts with NRIP1. Isoform 4 interacts (via AF-2 motif) with isoform 1 of FOXP3 (via LXXLL motif). Post-translationally, phosphorylation by conventional PKCs in neurons inhibits transcriptional activity. Phosphorylated on Thr-183 by MAPK1/ERK1 in vitro. In terms of processing, sumoylated by SENP1 and SENP2. Sumoylation, promoted by PIAS2, PIAS3, PIAS4 but not PIAS1, enhances the transcriptional activity. Desumoylated by SENP1. Ubiquitinated, leading to its degradation by the proteasome. Proteasomal degradation is required for efficient transcriptional activity and is prevented by HR. Post-translationally, monomethylated at Lys-38 by EZH2, this creates a degron recognized by a DCX (DDB1-DCAF1/VPRBP-CUL4A-RBX1) E3 ubiquitin ligase complex. In terms of tissue distribution, expressed in cerebellum, heart, liver, lung, kidney, retina and brown and white adipose tissues. Expressed in the subset of mature Th17 cells.

It is found in the nucleus. In terms of biological role, nuclear receptor that binds DNA as a monomer to ROR response elements (RORE) containing a single core motif half-site 5'-AGGTCA-3' preceded by a short A-T-rich sequence. Key regulator of embryonic development, cellular differentiation, immunity, circadian rhythm as well as lipid, steroid, xenobiotics and glucose metabolism. Considered to have intrinsic transcriptional activity, have some natural ligands like oxysterols that act as agonists (25-hydroxycholesterol) or inverse agonists (7-oxygenated sterols), enhancing or repressing the transcriptional activity, respectively. Recruits distinct combinations of cofactors to target genes regulatory regions to modulate their transcriptional expression, depending on the tissue, time and promoter contexts. Regulates genes involved in photoreceptor development including OPN1SW, OPN1SM and ARR3 and skeletal muscle development with MYOD1. Required for proper cerebellum development, regulates SHH gene expression, among others, to induce granule cells proliferation as well as expression of genes involved in calcium-mediated signal transduction. Regulates the circadian expression of several clock genes, including CLOCK, BMAL1, NPAS2 and CRY1. Competes with NR1D1 for binding to their shared DNA response element on some clock genes such as BMAL1, CRY1 and NR1D1 itself, resulting in NR1D1-mediated repression or RORA-mediated activation of clock genes expression, leading to the circadian pattern of clock genes expression. Therefore influences the period length and stability of the clock. Regulates genes involved in lipid metabolism such as apolipoproteins APOA1, APOA5, APOC3 and PPARG. In liver, has specific and redundant functions with RORC as positive or negative modulator of expression of genes encoding phase I and phase II proteins involved in the metabolism of lipids, steroids and xenobiotics, such as CYP7B1 and SULT2A1. Induces a rhythmic expression of some of these genes. In addition, interplays functionally with NR1H2 and NR1H3 for the regulation of genes involved in cholesterol metabolism. Also involved in the regulation of hepatic glucose metabolism through the modulation of G6PC1 and PCK1. In adipose tissue, plays a role as negative regulator of adipocyte differentiation, probably acting through dual mechanisms. May suppress CEBPB-dependent adipogenesis through direct interaction and PPARG-dependent adipogenesis through competition for DNA-binding. Downstream of IL6 and TGFB and synergistically with RORC isoform 2, is implicated in the lineage specification of uncommitted CD4(+) T-helper (T(H)) cells into T(H)17 cells, antagonizing the T(H)1 program. Probably regulates IL17 and IL17F expression on T(H) by binding to the essential enhancer conserved non-coding sequence 2 (CNS2) in the IL17-IL17F locus. Involved in hypoxia signaling by interacting with and activating the transcriptional activity of HIF1A. May inhibit cell growth in response to cellular stress. May exert an anti-inflammatory role by inducing CHUK expression and inhibiting NF-kappa-B signaling. The polypeptide is Nuclear receptor ROR-alpha (Rora) (Mus musculus (Mouse)).